A 311-amino-acid chain; its full sequence is 4-hydroxy-3-methylbut-2-enyl diphosphate reductase (311 aa).

C12 provides a ligand contact to [4Fe-4S] cluster. Residues H41 and H74 each contribute to the (2E)-4-hydroxy-3-methylbut-2-enyl diphosphate site. Dimethylallyl diphosphate is bound by residues H41 and H74. H41 and H74 together coordinate isopentenyl diphosphate. Residue C96 participates in [4Fe-4S] cluster binding. H124 provides a ligand contact to (2E)-4-hydroxy-3-methylbut-2-enyl diphosphate. Residue H124 participates in dimethylallyl diphosphate binding. H124 is a binding site for isopentenyl diphosphate. The active-site Proton donor is the E126. T168 is a binding site for (2E)-4-hydroxy-3-methylbut-2-enyl diphosphate. C198 provides a ligand contact to [4Fe-4S] cluster. Positions 226, 227, 228, and 270 each coordinate (2E)-4-hydroxy-3-methylbut-2-enyl diphosphate. Positions 226, 227, 228, and 270 each coordinate dimethylallyl diphosphate. Positions 226, 227, 228, and 270 each coordinate isopentenyl diphosphate.

Belongs to the IspH family. [4Fe-4S] cluster is required as a cofactor.

The catalysed reaction is isopentenyl diphosphate + 2 oxidized [2Fe-2S]-[ferredoxin] + H2O = (2E)-4-hydroxy-3-methylbut-2-enyl diphosphate + 2 reduced [2Fe-2S]-[ferredoxin] + 2 H(+). It carries out the reaction dimethylallyl diphosphate + 2 oxidized [2Fe-2S]-[ferredoxin] + H2O = (2E)-4-hydroxy-3-methylbut-2-enyl diphosphate + 2 reduced [2Fe-2S]-[ferredoxin] + 2 H(+). It functions in the pathway isoprenoid biosynthesis; dimethylallyl diphosphate biosynthesis; dimethylallyl diphosphate from (2E)-4-hydroxy-3-methylbutenyl diphosphate: step 1/1. It participates in isoprenoid biosynthesis; isopentenyl diphosphate biosynthesis via DXP pathway; isopentenyl diphosphate from 1-deoxy-D-xylulose 5-phosphate: step 6/6. Functionally, catalyzes the conversion of 1-hydroxy-2-methyl-2-(E)-butenyl 4-diphosphate (HMBPP) into a mixture of isopentenyl diphosphate (IPP) and dimethylallyl diphosphate (DMAPP). Acts in the terminal step of the DOXP/MEP pathway for isoprenoid precursor biosynthesis. The sequence is that of 4-hydroxy-3-methylbut-2-enyl diphosphate reductase from Saccharophagus degradans (strain 2-40 / ATCC 43961 / DSM 17024).